The sequence spans 207 residues: Large ribosomal subunit protein uL4 (207 aa).

Residues 56–75 (EVSGTTKKPFKQKGTGNARQ) are disordered.

The protein belongs to the universal ribosomal protein uL4 family. As to quaternary structure, part of the 50S ribosomal subunit.

Its function is as follows. One of the primary rRNA binding proteins, this protein initially binds near the 5'-end of the 23S rRNA. It is important during the early stages of 50S assembly. It makes multiple contacts with different domains of the 23S rRNA in the assembled 50S subunit and ribosome. In terms of biological role, forms part of the polypeptide exit tunnel. This chain is Large ribosomal subunit protein uL4, found in Rickettsia prowazekii (strain Madrid E).